Here is a 427-residue protein sequence, read N- to C-terminus: Glutamate-1-semialdehyde 2,1-aminomutase (427 aa).

At K267 the chain carries N6-(pyridoxal phosphate)lysine.

Belongs to the class-III pyridoxal-phosphate-dependent aminotransferase family. HemL subfamily. As to quaternary structure, homodimer. Requires pyridoxal 5'-phosphate as cofactor.

The protein localises to the cytoplasm. The enzyme catalyses (S)-4-amino-5-oxopentanoate = 5-aminolevulinate. Its pathway is porphyrin-containing compound metabolism; protoporphyrin-IX biosynthesis; 5-aminolevulinate from L-glutamyl-tRNA(Glu): step 2/2. The chain is Glutamate-1-semialdehyde 2,1-aminomutase from Geotalea uraniireducens (strain Rf4) (Geobacter uraniireducens).